The following is an 885-amino-acid chain: DNA mismatch repair protein MutS (885 aa).

Residue 626-633 (GPNMGGKS) participates in ATP binding.

The protein belongs to the DNA mismatch repair MutS family.

Its function is as follows. This protein is involved in the repair of mismatches in DNA. It is possible that it carries out the mismatch recognition step. This protein has a weak ATPase activity. The sequence is that of DNA mismatch repair protein MutS from Burkholderia ambifaria (strain MC40-6).